Here is a 38-residue protein sequence, read N- to C-terminus: Large ribosomal subunit protein bL36A (38 aa).

This sequence belongs to the bacterial ribosomal protein bL36 family.

This is Large ribosomal subunit protein bL36A from Pseudomonas aeruginosa (strain UCBPP-PA14).